The primary structure comprises 262 residues: MTNLKELRINIEKFPEALHNTLKDAKIYDSSSSPEAQVLFIDKKDGYYLKIASSKTLEREAEMTAYFQKKKLGLGYISYLSDQSQDFLLKKKIQGENYLAKQYLNNPKRLCDNLAENLRFLHEQNFEDCPILDHSERYLKKVEKNASINNSNLDFVNNYNIRTIEEAYDYIENKKLLLRNDTLLHGDYCLPNIILDNWKFKGFIDLDCAGVGDRHIDLFWGAWTLNFNIGTDQYRDRFFDAYGRDRIDVDRLKLVGCCEVFG.

The Proton acceptor role is filled by D187.

The protein belongs to the aminoglycoside phosphotransferase family.

The enzyme catalyses kanamycin A + ATP = kanamycin 3'-phosphate + ADP + H(+). This Lactococcus lactis subsp. lactis (strain IL1403) (Streptococcus lactis) protein is Probable aminoglycoside 3'-phosphotransferase (ymdC).